The following is a 544-amino-acid chain: Chaperonin GroEL (544 aa).

Residues 30 to 33, Lys51, 87 to 91, Gly415, and Asp495 contribute to the ATP site; these read TLGP and DGTTT.

The protein belongs to the chaperonin (HSP60) family. In terms of assembly, forms a cylinder of 14 subunits composed of two heptameric rings stacked back-to-back. Interacts with the co-chaperonin GroES.

It is found in the cytoplasm. The catalysed reaction is ATP + H2O + a folded polypeptide = ADP + phosphate + an unfolded polypeptide.. In terms of biological role, together with its co-chaperonin GroES, plays an essential role in assisting protein folding. The GroEL-GroES system forms a nano-cage that allows encapsulation of the non-native substrate proteins and provides a physical environment optimized to promote and accelerate protein folding. The protein is Chaperonin GroEL of Methylobacillus flagellatus (strain ATCC 51484 / DSM 6875 / VKM B-1610 / KT).